We begin with the raw amino-acid sequence, 586 residues long: Homothallic switching endonuclease (586 aa).

A DOD-type homing endonuclease domain is found at 215–370 (MLGLWLGDST…IVHISRSLGM (156 aa)).

Post-translationally, rapidly degraded via the ubiquitin-26S proteasome system through two ubiquitin-conjugating enzymes UBC2/RAD6 and UBC3/CDC34.

The protein localises to the nucleus. Functionally, initiation of mating type interconversion. This protein is a site-specific endonuclease that cleaves a site in the mat locus on chromosome III. The double-strand break is followed by a unidirectional gene conversion event that replaces the information at the mat locus by information copied from either of the two homologous loci (HMR and HML) that reside at the extremity of the chromosome III. Endonuclease expression takes place in late G1 just before cells enter S phase. This is Homothallic switching endonuclease (HO) from Saccharomyces cerevisiae (strain ATCC 204508 / S288c) (Baker's yeast).